A 150-amino-acid chain; its full sequence is Macrodomain Ter protein (150 aa).

This sequence belongs to the MatP family. Homodimer.

It localises to the cytoplasm. In terms of biological role, required for spatial organization of the terminus region of the chromosome (Ter macrodomain) during the cell cycle. Prevents early segregation of duplicated Ter macrodomains during cell division. Binds specifically to matS, which is a 13 bp signature motif repeated within the Ter macrodomain. The sequence is that of Macrodomain Ter protein from Shigella boydii serotype 18 (strain CDC 3083-94 / BS512).